Reading from the N-terminus, the 201-residue chain is 3-isopropylmalate dehydratase small subunit (201 aa).

It belongs to the LeuD family. LeuD type 1 subfamily. As to quaternary structure, heterodimer of LeuC and LeuD.

The enzyme catalyses (2R,3S)-3-isopropylmalate = (2S)-2-isopropylmalate. Its pathway is amino-acid biosynthesis; L-leucine biosynthesis; L-leucine from 3-methyl-2-oxobutanoate: step 2/4. Functionally, catalyzes the isomerization between 2-isopropylmalate and 3-isopropylmalate, via the formation of 2-isopropylmaleate. The polypeptide is 3-isopropylmalate dehydratase small subunit (Allorhizobium ampelinum (strain ATCC BAA-846 / DSM 112012 / S4) (Agrobacterium vitis (strain S4))).